We begin with the raw amino-acid sequence, 272 residues long: Putative phosphoenolpyruvate synthase regulatory protein (272 aa).

An ADP-binding site is contributed by 152–159 (GVSRCGKT).

The protein belongs to the pyruvate, phosphate/water dikinase regulatory protein family. PSRP subfamily.

The catalysed reaction is [pyruvate, water dikinase] + ADP = [pyruvate, water dikinase]-phosphate + AMP + H(+). It carries out the reaction [pyruvate, water dikinase]-phosphate + phosphate + H(+) = [pyruvate, water dikinase] + diphosphate. Its function is as follows. Bifunctional serine/threonine kinase and phosphorylase involved in the regulation of the phosphoenolpyruvate synthase (PEPS) by catalyzing its phosphorylation/dephosphorylation. The protein is Putative phosphoenolpyruvate synthase regulatory protein of Pseudomonas savastanoi pv. phaseolicola (strain 1448A / Race 6) (Pseudomonas syringae pv. phaseolicola (strain 1448A / Race 6)).